The sequence spans 557 residues: Urocanate hydratase (557 aa).

Residues 52–53, glutamine 130, 176–178, glutamate 196, arginine 201, 242–243, 263–267, 273–274, and tyrosine 322 each bind NAD(+); these read GG, GMG, NA, QTSAH, and YL. The active site involves cysteine 410. Residue glycine 492 coordinates NAD(+).

It belongs to the urocanase family. Requires NAD(+) as cofactor.

It is found in the cytoplasm. The catalysed reaction is 4-imidazolone-5-propanoate = trans-urocanate + H2O. It participates in amino-acid degradation; L-histidine degradation into L-glutamate; N-formimidoyl-L-glutamate from L-histidine: step 2/3. Its function is as follows. Catalyzes the conversion of urocanate to 4-imidazolone-5-propionate. The chain is Urocanate hydratase from Pseudoalteromonas translucida (strain TAC 125).